The following is a 301-amino-acid chain: (R)-2-haloacid dehalogenase (301 aa).

The protein belongs to the HAD-like hydrolase superfamily. S-2-haloalkanoic acid dehalogenase family. As to quaternary structure, homotetramer.

The enzyme catalyses an (R)-2-haloacid + H2O = a (2S)-2-hydroxycarboxylate + a halide anion + H(+). In terms of biological role, catalyzes the hydrolytic dehalogenation of small (R)-2-haloalkanoic acids to yield the corresponding (S)-2-hydroxyalkanoic acids. Acts on acids of short chain lengths, C(2) to C(4), with inversion of configuration at C-2. The chain is (R)-2-haloacid dehalogenase (hadD) from Pseudomonas putida (Arthrobacter siderocapsulatus).